A 64-amino-acid polypeptide reads, in one-letter code: Conotoxin Im11.2 (64 aa).

The first 26 residues, 1–26 (MMFRLTSVSCFLLVIVCLNLVVLTNA), serve as a signal peptide directing secretion. 4 disulfide bridges follow: Cys-27-Cys-41, Cys-34-Cys-46, Cys-40-Cys-50, and Cys-45-Cys-54. Aspartic acid 1-amide is present on Asp-57. The propeptide occupies 61-64 (ATFQ).

Belongs to the conotoxin I2 superfamily. In terms of tissue distribution, expressed by the venom duct.

It localises to the secreted. The chain is Conotoxin Im11.2 from Conus imperialis (Imperial cone).